A 247-amino-acid polypeptide reads, in one-letter code: Ribosomal RNA small subunit methyltransferase G (247 aa).

S-adenosyl-L-methionine-binding positions include G84, F89, 136-137 (AE), and R155.

It belongs to the methyltransferase superfamily. RNA methyltransferase RsmG family.

It localises to the cytoplasm. Its function is as follows. Specifically methylates the N7 position of a guanine in 16S rRNA. This chain is Ribosomal RNA small subunit methyltransferase G, found in Prochlorococcus marinus (strain MIT 9313).